The primary structure comprises 437 residues: Testis-specific Y-encoded-like protein 1 (437 aa).

A disordered region spans residues 1-81 (MSGLDGVKRT…QDAAGRGGTP (81 aa)). Polar residues predominate over residues 11-26 (TPLQTHSIIISDQVPS). Over residues 28 to 40 (QDAHQYLRLRDQS) the composition is skewed to basic and acidic residues. A Glycyl lysine isopeptide (Lys-Gly) (interchain with G-Cter in SUMO2) cross-link involves residue Lys-156.

This sequence belongs to the nucleosome assembly protein (NAP) family. Ubiquitinated by the CRL2(APPBP2) complex, which recognizes the Arg-Xaa-Xaa-Gly sequence at the C-terminus, leading to its degradation. Expressed in testis, ovary, liver, spleen, brain, kidney, prostate, lung, liver, and heart.

The protein resides in the nucleus. The protein localises to the nucleolus. The polypeptide is Testis-specific Y-encoded-like protein 1 (TSPYL1) (Homo sapiens (Human)).